Here is a 269-residue protein sequence, read N- to C-terminus: 4-hydroxy-tetrahydrodipicolinate reductase (269 aa).

NAD(+) contacts are provided by residues 8–13 (GVAGRM), 98–100 (GTT), and 122–125 (APNM). The Proton donor/acceptor role is filled by histidine 156. Histidine 157 provides a ligand contact to (S)-2,3,4,5-tetrahydrodipicolinate. Residue lysine 160 is the Proton donor of the active site. 166-167 (GT) is a binding site for (S)-2,3,4,5-tetrahydrodipicolinate.

This sequence belongs to the DapB family.

It is found in the cytoplasm. It catalyses the reaction (S)-2,3,4,5-tetrahydrodipicolinate + NAD(+) + H2O = (2S,4S)-4-hydroxy-2,3,4,5-tetrahydrodipicolinate + NADH + H(+). The enzyme catalyses (S)-2,3,4,5-tetrahydrodipicolinate + NADP(+) + H2O = (2S,4S)-4-hydroxy-2,3,4,5-tetrahydrodipicolinate + NADPH + H(+). It participates in amino-acid biosynthesis; L-lysine biosynthesis via DAP pathway; (S)-tetrahydrodipicolinate from L-aspartate: step 4/4. Its function is as follows. Catalyzes the conversion of 4-hydroxy-tetrahydrodipicolinate (HTPA) to tetrahydrodipicolinate. In Chromohalobacter salexigens (strain ATCC BAA-138 / DSM 3043 / CIP 106854 / NCIMB 13768 / 1H11), this protein is 4-hydroxy-tetrahydrodipicolinate reductase.